We begin with the raw amino-acid sequence, 122 residues long: MVQRADINNVLSEIRNLRTQMMQNQRIEQDQSVRGRIDGPRQVQETQEVPSFSDMLGKAVNNVHEVQSQASELRTAYEMGDPNVDITRVMIAAQKSSVSFEALTQVRNRVVRAYEDIMNMPI.

It belongs to the FliE family.

It localises to the bacterial flagellum basal body. The protein is Flagellar hook-basal body complex protein FliE of Marinobacter nauticus (strain ATCC 700491 / DSM 11845 / VT8) (Marinobacter aquaeolei).